A 435-amino-acid polypeptide reads, in one-letter code: Trigger factor (435 aa).

A PPIase FKBP-type domain is found at 164–249; that stretch reads GDFAKFDFEG…LHEIQGKKAG (86 aa).

It belongs to the FKBP-type PPIase family. Tig subfamily.

It is found in the cytoplasm. The catalysed reaction is [protein]-peptidylproline (omega=180) = [protein]-peptidylproline (omega=0). Involved in protein export. Acts as a chaperone by maintaining the newly synthesized protein in an open conformation. Functions as a peptidyl-prolyl cis-trans isomerase. The protein is Trigger factor of Campylobacter fetus subsp. fetus (strain 82-40).